A 185-amino-acid polypeptide reads, in one-letter code: Small ribosomal subunit protein uS5 (185 aa).

One can recognise an S5 DRBM domain in the interval 29–92 (LEEKVVKINR…EKAKKQLVRI (64 aa)).

This sequence belongs to the universal ribosomal protein uS5 family. In terms of assembly, part of the 30S ribosomal subunit. Contacts proteins S4 and S8.

With S4 and S12 plays an important role in translational accuracy. In terms of biological role, located at the back of the 30S subunit body where it stabilizes the conformation of the head with respect to the body. The chain is Small ribosomal subunit protein uS5 from Aster yellows witches'-broom phytoplasma (strain AYWB).